The chain runs to 215 residues: Phosphoribosylglycinamide formyltransferase (215 aa).

(6R)-10-formyltetrahydrofolate is bound by residues arginine 74, 99–102, and asparagine 116; that span reads MRIL. Histidine 118 (proton donor) is an active-site residue.

Belongs to the GART family.

The enzyme catalyses N(1)-(5-phospho-beta-D-ribosyl)glycinamide + (6R)-10-formyltetrahydrofolate = N(2)-formyl-N(1)-(5-phospho-beta-D-ribosyl)glycinamide + (6S)-5,6,7,8-tetrahydrofolate + H(+). It participates in purine metabolism; IMP biosynthesis via de novo pathway; N(2)-formyl-N(1)-(5-phospho-D-ribosyl)glycinamide from N(1)-(5-phospho-D-ribosyl)glycinamide (10-formyl THF route): step 1/1. Catalyzes the transfer of a formyl group from 10-formyltetrahydrofolate to 5-phospho-ribosyl-glycinamide (GAR), producing 5-phospho-ribosyl-N-formylglycinamide (FGAR) and tetrahydrofolate. The chain is Phosphoribosylglycinamide formyltransferase from Mycobacterium tuberculosis (strain CDC 1551 / Oshkosh).